Consider the following 406-residue polypeptide: Calsequestrin-1 (406 aa).

A signal peptide spans 1 to 34 (MRATDRMGARAVSKLRLALLFVLVLGTPRSGVQG). Phosphotyrosine is present on tyrosine 43. Serine 81 carries the phosphoserine modification. Threonine 124 carries the post-translational modification Phosphothreonine. Phosphoserine is present on serine 216. Asparagine 350 carries an N-linked (GlcNAc...) asparagine glycan. Residues 382–406 (EGEINTEDDDDDDDDDDDDDDDDDD) form a disordered region.

The protein belongs to the calsequestrin family. As to quaternary structure, monomer; increases in response to a depletion of intracellular calcium. Homodimer. Homotetramer and homopolymer. Can form linear homooligomers. Ca(2+) ions promote oligomerization. Interacts (via C-terminal end and preferentially with the monomeric form) with STIM1; this interaction increases in response to a depletion of intracellular calcium, decreases both STIM1 aggregation and clustering, interaction of STIM1 with ORAI1 and store-operated Ca(2+) entry (SOCE) activity. Interacts with ASPH and TRDN. Post-translationally, N-glycosylated. As to expression, detected in skeletal muscle and in smooth muscle from vas deferens, aorta and stomach (at protein level).

It is found in the endoplasmic reticulum. It localises to the sarcoplasmic reticulum. Its subcellular location is the sarcoplasmic reticulum lumen. The protein localises to the sarcoplasmic reticulum membrane. The protein resides in the mitochondrion matrix. Functionally, calsequestrin is a high-capacity, moderate affinity, calcium-binding protein and thus acts as an internal calcium store in muscle. Calcium ions are bound by clusters of acidic residues at the protein surface, often at the interface between subunits. Can bind around 80 Ca(2+) ions. Regulates the release of lumenal Ca(2+) via the calcium release channel RYR1; this plays an important role in triggering muscle contraction. Negatively regulates store-operated Ca(2+) entry (SOCE) activity. The polypeptide is Calsequestrin-1 (Casq1) (Rattus norvegicus (Rat)).